The following is a 473-amino-acid chain: H(+)/Cl(-) exchange transporter ClcA (473 aa).

Residues 1–32 (MKTDTSTFLAQQIVRLRRRDQIRRLMQRDKTP) are Cytoplasmic-facing. The helical transmembrane segment at 33–69 (LAILFMAAVVGTLTGLVGVAFEKAVSWVQNMRIGALV) threads the bilayer. Topologically, residues 70 to 76 (QVADHAF) are periplasmic. Residues 77–100 (LLWPLAFILSALLAMVGYFLVRKF) form a helical membrane-spanning segment. The short motif at 106-110 (GSGIP) is the Selectivity filter part_1 element. Residue Ser107 coordinates chloride. Residues 109 to 116 (IPEIEGAL) constitute an intramembrane region (helical). Topologically, residues 117–123 (EELRPVR) are cytoplasmic. Helical transmembrane passes span 124–141 (WWRV…TLGA) and 148–166 (EGPT…LDVF). A Selectivity filter part_2 motif is present at residues 146 to 150 (GREGP). At 167–176 (RMRSAEARHT) the chain is on the cytoplasmic side. 2 consecutive intramembrane regions (helical) follow at residues 177-189 (LLAT…LSAA) and 193-201 (PLAGILFII). The Cytoplasmic portion of the chain corresponds to 202–214 (EEMRPQFRYNLIS). The chain crosses the membrane as a helical span at residues 215–232 (IKAVFTGVIMSSIVFRIF). Residues 233-252 (NGEAPIIEVGKLSDAPVNTL) are Periplasmic-facing. The chain crosses the membrane as a helical span at residues 253–281 (WLYLILGIIFGCVGPVFNSLVLRTQDMFQ). Topologically, residues 282–287 (RFHGGE) are cytoplasmic. Residues 288-309 (IKKWVLMGGAIGGLCGILGLIE) traverse the membrane as a helical segment. The Periplasmic segment spans residues 310–329 (PEAAGGGFNLIPIAAAGNFS). 2 helical membrane passes run 330 to 349 (VGLL…LCFS) and 355 to 376 (GIFA…MAAA). The Selectivity filter part_3 motif lies at 355–359 (GIFAP). Residues Ile356 and Phe357 each coordinate chloride. Over 377-386 (VLFPQYHLEA) the chain is Periplasmic. Positions 387–401 (GTFAIAGMGALMAAS) form an intramembrane region, helical. Residues 402-404 (VRA) constitute an intramembrane region (note=Loop between two helices). The helical intramembrane region spans 405 to 416 (PLTGIVLVLEMT). Positions 417–421 (DNYQL) form an intramembrane region, note=Loop between two helices. The chain crosses the membrane as a helical span at residues 422–438 (ILPMIITCLGATLLAQF). Residues 439–473 (LGGKPLYSTILARTLAKQDAEQAAKSQNAPAGENT) lie on the Cytoplasmic side of the membrane. Residue Tyr445 coordinates chloride.

This sequence belongs to the chloride channel (TC 2.A.49) family. ClcA subfamily. Homodimer.

It localises to the cell inner membrane. It carries out the reaction 2 chloride(in) + H(+)(out) = 2 chloride(out) + H(+)(in). In terms of biological role, proton-coupled chloride transporter. Functions as antiport system and exchanges two chloride ions for 1 proton. Probably acts as an electrical shunt for an outwardly-directed proton pump that is linked to amino acid decarboxylation, as part of the extreme acid resistance (XAR) response. This Salmonella gallinarum (strain 287/91 / NCTC 13346) protein is H(+)/Cl(-) exchange transporter ClcA.